The chain runs to 84 residues: Large ribosomal subunit protein bL31B (84 aa).

The protein belongs to the bacterial ribosomal protein bL31 family. Type B subfamily. As to quaternary structure, part of the 50S ribosomal subunit.

The protein is Large ribosomal subunit protein bL31B of Staphylococcus aureus (strain Mu3 / ATCC 700698).